A 132-amino-acid chain; its full sequence is Large-conductance mechanosensitive channel (132 aa).

Helical transmembrane passes span 14–34, 38–58, and 67–87; these read VVDL…VSSL, IITP…LHFG, and GNFI…FMFI.

Belongs to the MscL family. In terms of assembly, homopentamer.

It is found in the cell membrane. Its function is as follows. Channel that opens in response to stretch forces in the membrane lipid bilayer. May participate in the regulation of osmotic pressure changes within the cell. This chain is Large-conductance mechanosensitive channel, found in Bacillus cereus (strain G9842).